A 169-amino-acid polypeptide reads, in one-letter code: TPD1 protein homolog 1B (169 aa).

An N-terminal signal peptide occupies residues 1-25 (MADCTTMRLASSVTIILLLLVASQA).

Expressed in roots, and at low levels in anthers during meiosis.

In terms of biological role, may play a role during anther development. This Oryza sativa subsp. japonica (Rice) protein is TPD1 protein homolog 1B.